The primary structure comprises 155 residues: SsrA-binding protein (155 aa).

Over residues 135-147 the composition is skewed to basic and acidic residues; the sequence is TIKRRDQERDIKK. A disordered region spans residues 135–155; the sequence is TIKRRDQERDIKKQMKHYNAR.

This sequence belongs to the SmpB family.

It localises to the cytoplasm. Functionally, required for rescue of stalled ribosomes mediated by trans-translation. Binds to transfer-messenger RNA (tmRNA), required for stable association of tmRNA with ribosomes. tmRNA and SmpB together mimic tRNA shape, replacing the anticodon stem-loop with SmpB. tmRNA is encoded by the ssrA gene; the 2 termini fold to resemble tRNA(Ala) and it encodes a 'tag peptide', a short internal open reading frame. During trans-translation Ala-aminoacylated tmRNA acts like a tRNA, entering the A-site of stalled ribosomes, displacing the stalled mRNA. The ribosome then switches to translate the ORF on the tmRNA; the nascent peptide is terminated with the 'tag peptide' encoded by the tmRNA and targeted for degradation. The ribosome is freed to recommence translation, which seems to be the essential function of trans-translation. The protein is SsrA-binding protein of Streptococcus pyogenes serotype M3 (strain SSI-1).